A 575-amino-acid polypeptide reads, in one-letter code: Carboxylesterase 5A (575 aa).

An N-terminal signal peptide occupies residues 1-20 (MSGNWVHPGQILIWAIWVLA). Cysteine 94 and cysteine 121 are disulfide-bonded. The active-site Acyl-ester intermediate is the serine 226. Residue asparagine 281 is glycosylated (N-linked (GlcNAc...) asparagine). Catalysis depends on glutamate 345, which acts as the Charge relay system. N-linked (GlcNAc...) asparagine glycosylation occurs at asparagine 363. Histidine 454 serves as the catalytic Charge relay system. N-linked (GlcNAc...) asparagine glycosylation is found at asparagine 513 and asparagine 524.

It belongs to the type-B carboxylesterase/lipase family. Post-translationally, N-glycosylated.

It is found in the secreted. The catalysed reaction is a carboxylic ester + H2O = an alcohol + a carboxylate + H(+). Functionally, involved in the detoxification of xenobiotics and in the activation of ester and amide prodrugs. The chain is Carboxylesterase 5A (CES5A) from Homo sapiens (Human).